A 241-amino-acid polypeptide reads, in one-letter code: 2,3,4,5-tetrahydropyridine-2,6-dicarboxylate N-acetyltransferase (241 aa).

The protein belongs to the transferase hexapeptide repeat family. DapH subfamily.

The enzyme catalyses (S)-2,3,4,5-tetrahydrodipicolinate + acetyl-CoA + H2O = L-2-acetamido-6-oxoheptanedioate + CoA. It functions in the pathway amino-acid biosynthesis; L-lysine biosynthesis via DAP pathway; LL-2,6-diaminopimelate from (S)-tetrahydrodipicolinate (acetylase route): step 1/3. Its function is as follows. Catalyzes the transfer of an acetyl group from acetyl-CoA to tetrahydrodipicolinate. The chain is 2,3,4,5-tetrahydropyridine-2,6-dicarboxylate N-acetyltransferase from Thermoanaerobacter sp. (strain X514).